The sequence spans 568 residues: MNLFKEKKIKKIIYINWRFVTLCSIVFLFLVILTLRIIFLQIINSKKLAYEGDRRTLRIQSVINRRGIINDRLGYPLAVAVPVNAVFIDPTMITNKNDIKNNIRWKALSEILSIPLNKLIFFINSDKNIKFIYLARQINPEIGDYIKALKLPGVFLIEESKRYYPTGAIAAQLIGINNIDGEGIEGIEKSFNSYLTGTPGKRKIRKDNQGQIIENESLINKSNSNNLILSIDKKLQTIVYQKLNNAVNENQADFGIAILINIETGEILAMANSPSYNPNNMQYMINKNLRNKAITDIFEPGSTVKPIVIMEALKRGIIKKNSIINTKPYFIKKHKITDVAYHEKLNITGILKKSSNVGVSKIALSMNTSELINSYIKFGLGQPTNLGLIGEQKGFLPKKKKLSDLEKATFSFGYGLMITPLQLARLYTIIGSYGIYRPLSIIKIDHPLYEKRIFPKRYVKNVIHMMETVAHPGEGGSQAAIKGYRVAIKTGTAKKVGIHGYYIKKYIAYTAGIAPASNPKFSLTIIIDNPKGEKYYGGAVSAPVFSKIMKLVLKEMKIKPDNLKNKLS.

A helical transmembrane segment spans residues 19–39; that stretch reads FVTLCSIVFLFLVILTLRIIF. Ser302 functions as the Acyl-ester intermediate in the catalytic mechanism.

Belongs to the transpeptidase family. FtsI subfamily.

It localises to the cell inner membrane. It carries out the reaction Preferential cleavage: (Ac)2-L-Lys-D-Ala-|-D-Ala. Also transpeptidation of peptidyl-alanyl moieties that are N-acyl substituents of D-alanine.. It participates in cell wall biogenesis; peptidoglycan biosynthesis. Its function is as follows. Catalyzes cross-linking of the peptidoglycan cell wall at the division septum. In Buchnera aphidicola subsp. Schizaphis graminum (strain Sg), this protein is Peptidoglycan D,D-transpeptidase FtsI.